The chain runs to 608 residues: Protoheme IX farnesyltransferase (608 aa).

The COX15/CtaA stretch occupies residues 1–304 (MKTPAWSRLA…VFLATSALER (304 aa)). Helical transmembrane passes span 10–30 (AGYAWGVLLWNVLVALFGAYV), 67–87 (ATSGLAFLSVLALFLWALRAF), 99–119 (LALFFMVTESLVGASLVLFGW), 139–159 (TYFLLAALALTAWWASGGGPL), 167–187 (VGLALFLGLLALLFLGMSGAV), 220–240 (VLHPLIAVSVGLYVVFAGYLV), 252–272 (LAQGLAYLYGAQLLAGLINVA), 277–297 (VWMQILHLLLAYAVWLLFVFL), 338–357 (VISLLLFTALFGALIAAKGW), 362–384 (VFLAVALGGYMMAGAANAINMVV), 411–431 (LLFAFALAVLGFAVLWWGANL), 432–452 (LAATLALMGLIWYVLVYTLYL), 460–480 (IVIGGAAGAFPPLVGWAAVTG), 488–508 (YLFALIFFWTPVHFWALALMI), 530–550 (VIQIALYALLTALISLMPLLL), 555–575 (LLYLAASLLLNALLLLKSLAL), and 584–604 (AVSLYKYSMLYLALLFAAMAV). Positions 339-606 (ISLLLFTALF…LLFAAMAVDR (268 aa)) are protoheme IX prenyltransferase.

The protein in the N-terminal section; belongs to the COX15/CtaA family. It in the C-terminal section; belongs to the UbiA prenyltransferase family. Protoheme IX farnesyltransferase subfamily.

The protein localises to the cell inner membrane. The enzyme catalyses heme b + (2E,6E)-farnesyl diphosphate + H2O = Fe(II)-heme o + diphosphate. The protein operates within porphyrin-containing compound metabolism; heme O biosynthesis; heme O from protoheme: step 1/1. In terms of biological role, converts heme B (protoheme IX) to heme O by substitution of the vinyl group on carbon 2 of heme B porphyrin ring with a hydroxyethyl farnesyl side group. This is Protoheme IX farnesyltransferase (ctaB) from Thermus thermophilus (strain ATCC BAA-163 / DSM 7039 / HB27).